The following is a 362-amino-acid chain: DNA replication and repair protein RecF (362 aa).

ATP is bound at residue 30–37 (GPNGSGKT).

This sequence belongs to the RecF family.

It is found in the cytoplasm. The RecF protein is involved in DNA metabolism; it is required for DNA replication and normal SOS inducibility. RecF binds preferentially to single-stranded, linear DNA. It also seems to bind ATP. The protein is DNA replication and repair protein RecF of Proteus mirabilis (strain HI4320).